A 212-amino-acid polypeptide reads, in one-letter code: Sclerostin (212 aa).

The N-terminal stretch at 1 to 23 is a signal peptide; the sequence is MQLSLALCLVCLLVHAAFRVVEG. Asn-52 carries an N-linked (GlcNAc...) asparagine glycan. 4 cysteine pairs are disulfide-bonded: Cys-79–Cys-133, Cys-93–Cys-147, Cys-104–Cys-164, and Cys-108–Cys-166. Residues 81-171 enclose the CTCK domain; the sequence is ELHFTRYVTD…ASCKCKRLTR (91 aa). Residue Asn-174 is glycosylated (N-linked (GlcNAc...) asparagine). The interval 179–212 is disordered; the sequence is KDFGPEAARPQTGRKLRPRARGTKASRAELENAY. Over residues 190 to 202 the composition is skewed to basic residues; it reads TGRKLRPRARGTK.

It belongs to the sclerostin family. In terms of assembly, interacts with LRP4 (via the extracellular domain); the interaction facilitates the inhibition of Wnt signaling. Interacts with LRP5 (via the first two YWTD-EGF repeat domains); the interaction inhibits Wnt-mediated signaling. Interacts with LRP6.

The protein resides in the secreted. It is found in the extracellular space. It localises to the extracellular matrix. Negative regulator of bone growth that acts through inhibition of Wnt signaling and bone formation. This is Sclerostin from Bos taurus (Bovine).